Consider the following 149-residue polypeptide: Large ribosomal subunit protein bL9 (149 aa).

It belongs to the bacterial ribosomal protein bL9 family.

In terms of biological role, binds to the 23S rRNA. The protein is Large ribosomal subunit protein bL9 of Haemophilus ducreyi (strain 35000HP / ATCC 700724).